Consider the following 416-residue polypeptide: Serine hydroxymethyltransferase (416 aa).

(6S)-5,6,7,8-tetrahydrofolate is bound by residues Leu-121 and 125-127; that span reads GHL. Lys-230 carries the N6-(pyridoxal phosphate)lysine modification. 354–356 is a (6S)-5,6,7,8-tetrahydrofolate binding site; that stretch reads SPF.

It belongs to the SHMT family. As to quaternary structure, homodimer. The cofactor is pyridoxal 5'-phosphate.

It is found in the cytoplasm. The catalysed reaction is (6R)-5,10-methylene-5,6,7,8-tetrahydrofolate + glycine + H2O = (6S)-5,6,7,8-tetrahydrofolate + L-serine. The protein operates within one-carbon metabolism; tetrahydrofolate interconversion. Its pathway is amino-acid biosynthesis; glycine biosynthesis; glycine from L-serine: step 1/1. Catalyzes the reversible interconversion of serine and glycine with tetrahydrofolate (THF) serving as the one-carbon carrier. This reaction serves as the major source of one-carbon groups required for the biosynthesis of purines, thymidylate, methionine, and other important biomolecules. Also exhibits THF-independent aldolase activity toward beta-hydroxyamino acids, producing glycine and aldehydes, via a retro-aldol mechanism. The chain is Serine hydroxymethyltransferase from Prochlorococcus marinus (strain MIT 9211).